The sequence spans 163 residues: MASFAQAAKSLLLKEFVGAFFLSMRQFFAPKATLNYPHEKGPVSPRFRGEHALRRYPNGEERCIACKLCEAICPAQAITIEAGPRRNDGTRRTVRYDIDMVKCIYCGFCQEACPVDAIVEGPNFEFATETREELYYDKDKLLANGDRWEREIARNIAMDAPYR.

4Fe-4S ferredoxin-type domains lie at 53-83 (LRRY…IEAG) and 94-123 (VRYD…EGPN). The [4Fe-4S] cluster site is built by cysteine 63, cysteine 66, cysteine 69, cysteine 73, cysteine 103, cysteine 106, cysteine 109, and cysteine 113.

The protein belongs to the complex I 23 kDa subunit family. In terms of assembly, NDH-1 is composed of 14 different subunits. Subunits NuoA, H, J, K, L, M, N constitute the membrane sector of the complex. [4Fe-4S] cluster is required as a cofactor.

The protein resides in the cell inner membrane. It catalyses the reaction a quinone + NADH + 5 H(+)(in) = a quinol + NAD(+) + 4 H(+)(out). In terms of biological role, NDH-1 shuttles electrons from NADH, via FMN and iron-sulfur (Fe-S) centers, to quinones in the respiratory chain. The immediate electron acceptor for the enzyme in this species is believed to be ubiquinone. Couples the redox reaction to proton translocation (for every two electrons transferred, four hydrogen ions are translocated across the cytoplasmic membrane), and thus conserves the redox energy in a proton gradient. This Brucella anthropi (strain ATCC 49188 / DSM 6882 / CCUG 24695 / JCM 21032 / LMG 3331 / NBRC 15819 / NCTC 12168 / Alc 37) (Ochrobactrum anthropi) protein is NADH-quinone oxidoreductase subunit I.